The chain runs to 572 residues: Secreted triacylglycerol lipase LIP6 (572 aa).

The signal sequence occupies residues 1 to 23 (MYSTSLLRWLVVALVSAVPLVTA). Cysteines 117 and 291 form a disulfide. The active-site Nucleophile is S202. Residue D351 is part of the active site. N-linked (GlcNAc...) asparagine glycosylation occurs at N360. H385 is an active-site residue. Residues 468–572 (KGGVWNDVLK…SSRRHVARFM (105 aa)) form a disordered region. The span at 491 to 511 (PESKKATKKYKSESKAEKKQP) shows a compositional bias: basic and acidic residues. Positions 512–525 (DSIPSSSSKSSSDN) are enriched in low complexity. N-linked (GlcNAc...) asparagine glycosylation is present at N525. A compositionally biased stretch (basic residues) spans 528–540 (AHAKYHAHGHGHG). The segment covering 541 to 562 (HASSNSNNGHSHSAKESSTSKG) has biased composition (low complexity). Basic residues predominate over residues 563–572 (SSRRHVARFM).

This sequence belongs to the AB hydrolase superfamily. Lipase family. Class Lip subfamily.

Its subcellular location is the secreted. The protein resides in the cell wall. The catalysed reaction is a triacylglycerol + H2O = a diacylglycerol + a fatty acid + H(+). It carries out the reaction a monoacylglycerol + H2O = glycerol + a fatty acid + H(+). It catalyses the reaction a diacylglycerol + H2O = a monoacylglycerol + a fatty acid + H(+). Functionally, secreted lipase involved in Dandruff and seborrheic dermatitis (D/SD) probably via lipase-mediated breakdown of sebaceous lipids and release of irritating free fatty acids. Shows only minimal activity against triolein. Mostly converts monoolein to di- and triolein, while free fatty acids are only produced in low amounts. The protein is Secreted triacylglycerol lipase LIP6 of Malassezia globosa (strain ATCC MYA-4612 / CBS 7966) (Dandruff-associated fungus).